The chain runs to 360 residues: UDP-N-acetylglucosamine--N-acetylmuramyl-(pentapeptide) pyrophosphoryl-undecaprenol N-acetylglucosamine transferase (360 aa).

UDP-N-acetyl-alpha-D-glucosamine-binding positions include 12–14 (TAG), serine 198, and glutamine 289.

This sequence belongs to the glycosyltransferase 28 family. MurG subfamily.

The protein localises to the cell membrane. It carries out the reaction Mur2Ac(oyl-L-Ala-gamma-D-Glu-L-Lys-D-Ala-D-Ala)-di-trans,octa-cis-undecaprenyl diphosphate + UDP-N-acetyl-alpha-D-glucosamine = beta-D-GlcNAc-(1-&gt;4)-Mur2Ac(oyl-L-Ala-gamma-D-Glu-L-Lys-D-Ala-D-Ala)-di-trans,octa-cis-undecaprenyl diphosphate + UDP + H(+). It participates in cell wall biogenesis; peptidoglycan biosynthesis. In terms of biological role, cell wall formation. Catalyzes the transfer of a GlcNAc subunit on undecaprenyl-pyrophosphoryl-MurNAc-pentapeptide (lipid intermediate I) to form undecaprenyl-pyrophosphoryl-MurNAc-(pentapeptide)GlcNAc (lipid intermediate II). The protein is UDP-N-acetylglucosamine--N-acetylmuramyl-(pentapeptide) pyrophosphoryl-undecaprenol N-acetylglucosamine transferase of Streptococcus equi subsp. zooepidemicus (strain MGCS10565).